We begin with the raw amino-acid sequence, 279 residues long: Tryptophan 2,3-dioxygenase (279 aa).

Substrate-binding positions include 48–52 (FIVIH), Y110, and R114. A heme-binding site is contributed by H237. T251 lines the substrate pocket.

This sequence belongs to the tryptophan 2,3-dioxygenase family. In terms of assembly, homotetramer. Heme is required as a cofactor.

It catalyses the reaction L-tryptophan + O2 = N-formyl-L-kynurenine. Its pathway is amino-acid degradation; L-tryptophan degradation via kynurenine pathway; L-kynurenine from L-tryptophan: step 1/2. Functionally, heme-dependent dioxygenase that catalyzes the oxidative cleavage of the L-tryptophan (L-Trp) pyrrole ring and converts L-tryptophan to N-formyl-L-kynurenine. Catalyzes the oxidative cleavage of the indole moiety. The polypeptide is Tryptophan 2,3-dioxygenase (Bacillus cereus (strain ATCC 10987 / NRS 248)).